A 122-amino-acid polypeptide reads, in one-letter code: Large ribosomal subunit protein uL14c (122 aa).

It belongs to the universal ribosomal protein uL14 family. As to quaternary structure, part of the 50S ribosomal subunit.

The protein localises to the plastid. Its subcellular location is the chloroplast. Functionally, binds to 23S rRNA. In Chloranthus spicatus (Chulantree), this protein is Large ribosomal subunit protein uL14c.